The primary structure comprises 441 residues: Membrane protein PB1A10.07c (441 aa).

A run of 11 helical transmembrane segments spans residues 1–21 (MGAV…VVGI), 41–61 (VGAV…SWCM), 97–117 (LSFT…LCNT), 128–148 (GLWP…FFIP), 158–178 (IISV…LVDF), 206–226 (TVGM…FFCA), 235–255 (INTI…HPTI), 263–283 (GLAQ…SALA), 307–327 (VIGA…AASS), 364–384 (YNFI…ASLL), and 415–435 (IITS…PVFF).

This sequence belongs to the TDE1 family.

The protein localises to the membrane. In Schizosaccharomyces pombe (strain 972 / ATCC 24843) (Fission yeast), this protein is Membrane protein PB1A10.07c.